The primary structure comprises 307 residues: Alpha N-terminal protein methyltransferase 1 (307 aa).

Residues 38–51 are compositionally biased toward low complexity; sequence EPAPAPAAGSNGVA. The tract at residues 38–60 is disordered; that stretch reads EPAPAPAAGSNGVAGEEEAGGGG. S-adenosyl-L-methionine-binding positions include G123, R128, 145 to 147, 179 to 180, and Q195; these read EPV and LQ.

Belongs to the methyltransferase superfamily. NTM1 family.

It catalyses the reaction N-terminal L-alanyl-L-prolyl-L-lysyl-[protein] + 3 S-adenosyl-L-methionine = N-terminal N,N,N-trimethyl-L-alanyl-L-prolyl-L-lysyl-[protein] + 3 S-adenosyl-L-homocysteine + 3 H(+). It carries out the reaction N-terminal L-seryl-L-prolyl-L-lysyl-[protein] + 3 S-adenosyl-L-methionine = N-terminal N,N,N-trimethyl-L-seryl-L-prolyl-L-lysyl-[protein] + 3 S-adenosyl-L-homocysteine + 3 H(+). The catalysed reaction is N-terminal L-prolyl-L-prolyl-L-lysyl-[protein] + 2 S-adenosyl-L-methionine = N-terminal N,N-dimethyl-L-prolyl-L-prolyl-L-lysyl-[protein] + 2 S-adenosyl-L-homocysteine + 2 H(+). Functionally, alpha-N-methyltransferase that methylates the N-terminus of target proteins containing the N-terminal motif [Ala/Pro/Ser]-Pro-Lys when the initiator Met is cleaved. Specifically catalyzes mono-, di- or tri-methylation of exposed alpha-amino group of Ala or Ser residue in the [Ala/Ser]-Pro-Lys motif and mono- or di-methylation of Pro in the Pro-Pro-Lys motif. This chain is Alpha N-terminal protein methyltransferase 1, found in Oryza sativa subsp. japonica (Rice).